The chain runs to 593 residues: Alanine--tRNA ligase (593 aa).

H456, H460, C558, and H562 together coordinate Zn(2+).

Belongs to the class-II aminoacyl-tRNA synthetase family. Zn(2+) is required as a cofactor.

The protein resides in the cytoplasm. The catalysed reaction is tRNA(Ala) + L-alanine + ATP = L-alanyl-tRNA(Ala) + AMP + diphosphate. Functionally, catalyzes the attachment of alanine to tRNA(Ala) in a two-step reaction: alanine is first activated by ATP to form Ala-AMP and then transferred to the acceptor end of tRNA(Ala). Also edits incorrectly charged Ser-tRNA(Ala) and Gly-tRNA(Ala) via its editing domain. This is Alanine--tRNA ligase (alaS) from Borrelia hermsii (strain HS1 / DAH).